The following is a 1260-amino-acid chain: uncharacterized protein (1260 aa).

This sequence belongs to the oxoprolinase family.

This is an uncharacterized protein from Schizosaccharomyces pombe (strain 972 / ATCC 24843) (Fission yeast).